The primary structure comprises 377 residues: Stimulator of interferon genes protein (377 aa).

Residues 1–21 (MRRAEENNGFGTIPKRRNQHT) lie on the Cytoplasmic side of the membrane. A helical transmembrane segment spans residues 22-42 (PFYASIGMIVVIIVAFTSYHI). Residues 43–57 (TSYGDDRNRAMRQYS) are Extracellular-facing. The chain crosses the membrane as a helical span at residues 58–80 (FTFSLAYLAFLVGELLRRCCLFA). The Cytoplasmic portion of the chain corresponds to 81–101 (EEYRHIETRYNGSLKKAIQTT). A helical transmembrane segment spans residues 102–122 (FSFGHNNVLFVASLLFFVVFV). At 123–154 (ASNDPNGSSSVIQGNSTAEPHTEMRQTSGWQG) the chain is on the extracellular side. Residues 155 to 175 (LWGQFIISALLTPLVVHLLGL) form a helical membrane-spanning segment. At 176-377 (RELSKVEESQ…LKDSELEIGG (202 aa)) the chain is on the cytoplasmic side. 2',3'-cGAMP-binding positions include tyrosine 206, arginine 272, 278 to 279 (RH), and threonine 303. 3',3'-c-di-GMP is bound by residues tyrosine 206, arginine 272, arginine 278, and 300 to 303 (EYAT).

It belongs to the TMEM173 family. Homodimer.

The protein resides in the endoplasmic reticulum membrane. Its function is as follows. Sensor of cytosolic DNA from bacteria and viruses that promotes autophagy. Acts by recognizing and binding cyclic GMP-AMP (cGAMP), a messenger produced by CGAS in response to DNA in the cytosol. Following cGAMP-binding, promotes the formation of autophagosomes, leading to target cytosolic DNA for degradation by the lysosome. Exhibits guanine base-specific ligand recognition. Binds 3'-3'linked cGAMP, 2'-3' linked cGAMP and 3'-3' linked c-di-GMP with much greater affinity as compared to 3'-3' linked c-di-AMP. Lacks the C-terminal tail (CTT) found in mammalian orthologs which is essential for interferon signaling. The sequence is that of Stimulator of interferon genes protein from Nematostella vectensis (Starlet sea anemone).